The chain runs to 263 residues: Triosephosphate isomerase (263 aa).

Position 10–12 (10–12 (NWK)) interacts with substrate. His-104 serves as the catalytic Electrophile. The Proton acceptor role is filled by Glu-176. Residues Gly-182, Ser-221, and 242-243 (GG) each bind substrate.

The protein belongs to the triosephosphate isomerase family. Homodimer.

The protein resides in the cytoplasm. It carries out the reaction D-glyceraldehyde 3-phosphate = dihydroxyacetone phosphate. It participates in carbohydrate biosynthesis; gluconeogenesis. It functions in the pathway carbohydrate degradation; glycolysis; D-glyceraldehyde 3-phosphate from glycerone phosphate: step 1/1. Involved in the gluconeogenesis. Catalyzes stereospecifically the conversion of dihydroxyacetone phosphate (DHAP) to D-glyceraldehyde-3-phosphate (G3P). This Haemophilus influenzae (strain ATCC 51907 / DSM 11121 / KW20 / Rd) protein is Triosephosphate isomerase.